The following is a 254-amino-acid chain: Hemin import ATP-binding protein HmuV (254 aa).

Residues 2-239 enclose the ABC transporter domain; that stretch reads LNINQVNINL…DTLSQVWHYD (238 aa). 34–41 serves as a coordination point for ATP; sequence GPNGAGKS.

Belongs to the ABC transporter superfamily. Heme (hemin) importer (TC 3.A.1.14.5) family. In terms of assembly, the complex is composed of two ATP-binding proteins (HmuV), two transmembrane proteins (HmuU) and a solute-binding protein (HmuT).

It localises to the cell inner membrane. In terms of biological role, part of the ABC transporter complex HmuTUV involved in hemin import. Responsible for energy coupling to the transport system. The polypeptide is Hemin import ATP-binding protein HmuV (Shewanella denitrificans (strain OS217 / ATCC BAA-1090 / DSM 15013)).